The primary structure comprises 302 residues: Polyamine aminopropyltransferase (302 aa).

A PABS domain is found at 4–239; the sequence is WTWHLEWQTP…GLWGFIYASD (236 aa). Gln33 provides a ligand contact to S-methyl-5'-thioadenosine. Residues His64 and Glu88 each contribute to the spermidine site. S-methyl-5'-thioadenosine contacts are provided by residues Asp108 and 140–141; that span reads DG. The active-site Proton acceptor is the Asp158. S-methyl-5'-thioadenosine is bound at residue Pro167.

It belongs to the spermidine/spermine synthase family. Homodimer or homotetramer.

The protein localises to the cytoplasm. It catalyses the reaction S-adenosyl 3-(methylsulfanyl)propylamine + putrescine = S-methyl-5'-thioadenosine + spermidine + H(+). The protein operates within amine and polyamine biosynthesis; spermidine biosynthesis; spermidine from putrescine: step 1/1. Functionally, catalyzes the irreversible transfer of a propylamine group from the amino donor S-adenosylmethioninamine (decarboxy-AdoMet) to putrescine (1,4-diaminobutane) to yield spermidine. The polypeptide is Polyamine aminopropyltransferase (Sulfolobus acidocaldarius (strain ATCC 33909 / DSM 639 / JCM 8929 / NBRC 15157 / NCIMB 11770)).